A 316-amino-acid polypeptide reads, in one-letter code: D-alanine--D-alanine ligase (316 aa).

The 200-residue stretch at 104–303 folds into the ATP-grasp domain; the sequence is KRVWLQHGLP…YADLCVAILA (200 aa). An ATP-binding site is contributed by 130 to 185; the sequence is PDRLGLPLILKPPHEGSTVGITKVAGYSDMKAAYELAARFDAEVLAEQFITGRELT. Mg(2+) is bound by residues Asp-257, Glu-270, and Asn-272.

It belongs to the D-alanine--D-alanine ligase family. Requires Mg(2+) as cofactor. Mn(2+) serves as cofactor.

The protein resides in the cytoplasm. The catalysed reaction is 2 D-alanine + ATP = D-alanyl-D-alanine + ADP + phosphate + H(+). The protein operates within cell wall biogenesis; peptidoglycan biosynthesis. Functionally, cell wall formation. The protein is D-alanine--D-alanine ligase of Bordetella bronchiseptica (strain ATCC BAA-588 / NCTC 13252 / RB50) (Alcaligenes bronchisepticus).